Consider the following 31-residue polypeptide: Sarcolipin (31 aa).

Residues 1–7 are Cytoplasmic-facing; that stretch reads MERSTRE. The helical transmembrane segment at 8–26 threads the bilayer; that stretch reads LCLNFTVVLITVILIWLLV. The Lumenal segment spans residues 27–31; sequence RSYQY.

This sequence belongs to the sarcolipin family. As to quaternary structure, homooligomer. Can also form heterooligomers with other sarcoplasmic/endoplasmic reticulum calcium ATPase (SERCA) regulators ARLN, ERLN, PLN and STRIT1/DWORF. Monomer. Interacts with calcium ATPase ATP2A1/SERCA1. Interacts as a monomer with ATP2A2/SERCA2; the interaction decreases ATP2A2 Ca(2+) affinity. Interacts with VMP1; VMP1 competes with PLN and SLN to prevent them from forming an inhibitory complex with ATP2A2. Skeletal muscle (at protein level).

It is found in the sarcoplasmic reticulum membrane. Its subcellular location is the endoplasmic reticulum membrane. In terms of biological role, reversibly inhibits the activity of ATP2A1/SERCA1 and ATP2A2/SERCA2 in sarcoplasmic reticulum by decreasing the apparent affinity of the ATPase for Ca(2+). Also inhibits the activity of ATP2A3/SERCA3. Modulates calcium re-uptake during muscle relaxation and plays an important role in calcium homeostasis in muscle. Required for muscle-based, non-shivering thermogenesis. This Oryctolagus cuniculus (Rabbit) protein is Sarcolipin (SLN).